The primary structure comprises 479 residues: Ribosomal RNA small subunit methyltransferase F (479 aa).

S-adenosyl-L-methionine is bound by residues 125 to 131, Glu-149, Asp-176, and Asp-194; that span reads AAAPGSK. Cys-247 functions as the Nucleophile in the catalytic mechanism.

It belongs to the class I-like SAM-binding methyltransferase superfamily. RsmB/NOP family.

It localises to the cytoplasm. It catalyses the reaction cytidine(1407) in 16S rRNA + S-adenosyl-L-methionine = 5-methylcytidine(1407) in 16S rRNA + S-adenosyl-L-homocysteine + H(+). In terms of biological role, specifically methylates the cytosine at position 1407 (m5C1407) of 16S rRNA. This chain is Ribosomal RNA small subunit methyltransferase F, found in Salmonella newport (strain SL254).